The chain runs to 236 residues: MAPDPWFSTYDSTCQIAQEIAEKIQERNQCERRGEKTPKLTLTIRTLLKNLKVKIDLLKDLLLRAVSTRQITQLEGDRRQNLLDDLVTRERLLLASFKNEGSEPDLIRSSLMSEEAKRGTPNPWLCEEPEETRGLGFDEIRQQQQKIIQEQDAGLDALSSIISRQKQMGQEIGNELDEQNEIIDDLANLVENTDEKLRTEARRVTLVDRKSASCGMIMVILLLLVAIVVVAVWPTN.

Topologically, residues 1-215 (MAPDPWFSTY…LVDRKSASCG (215 aa)) are cytoplasmic. A coiled-coil region spans residues 42–65 (LTIRTLLKNLKVKIDLLKDLLLRA). S102 and S160 each carry phosphoserine. The t-SNARE coiled-coil homology domain occupies 145-207 (QKIIQEQDAG…RTEARRVTLV (63 aa)). A helical; Anchor for type IV membrane protein membrane pass occupies residues 216–232 (MIMVILLLLVAIVVVAV). Over 233-236 (WPTN) the chain is Vesicular.

Belongs to the syntaxin family. As to quaternary structure, part of the SNARE core complex containing STX7, VAMP8 and VTI1B. Interacts with VAMP8. Forms a SNARE complex with STX7, VTI1B and VAMP8 which functions in the homotypic fusion of late endosomes. Component of the SNARE complex composed of STX7, STX8, VAMP7 and VTI1B that is required for heterotypic fusion of late endosomes with lysosomes. Interacts with HECTD3. Interacts with TPC1. In terms of processing, ubiquitinated by HECTD3. As to expression, widely expressed in all tissues examined.

It localises to the membrane. Its function is as follows. Vesicle trafficking protein that functions in the early secretory pathway, possibly by mediating retrograde transport from cis-Golgi membranes to the ER. This is Syntaxin-8 (Stx8) from Rattus norvegicus (Rat).